The primary structure comprises 353 residues: Methylthioribose-1-phosphate isomerase (353 aa).

The active-site Proton donor is Asp-241.

This sequence belongs to the eIF-2B alpha/beta/delta subunits family. MtnA subfamily.

It localises to the cytoplasm. It is found in the nucleus. The enzyme catalyses 5-(methylsulfanyl)-alpha-D-ribose 1-phosphate = 5-(methylsulfanyl)-D-ribulose 1-phosphate. The protein operates within amino-acid biosynthesis; L-methionine biosynthesis via salvage pathway; L-methionine from S-methyl-5-thio-alpha-D-ribose 1-phosphate: step 1/6. In terms of biological role, catalyzes the interconversion of methylthioribose-1-phosphate (MTR-1-P) into methylthioribulose-1-phosphate (MTRu-1-P). This is Methylthioribose-1-phosphate isomerase (mri1) from Danio rerio (Zebrafish).